A 365-amino-acid chain; its full sequence is Probable dual-specificity RNA methyltransferase RlmN (365 aa).

Glu-108 functions as the Proton acceptor in the catalytic mechanism. Residues 114-352 enclose the Radical SAM core domain; it reads YPDRNTVCIS…SCTVRDTRGR (239 aa). Cys-121 and Cys-358 are joined by a disulfide. Residues Cys-128, Cys-132, and Cys-135 each coordinate [4Fe-4S] cluster. S-adenosyl-L-methionine contacts are provided by residues 179 to 180, Ser-213, 236 to 238, and Asn-315; these read GE and SLH. The active-site S-methylcysteine intermediate is Cys-358.

It belongs to the radical SAM superfamily. RlmN family. [4Fe-4S] cluster is required as a cofactor.

It is found in the cytoplasm. The catalysed reaction is adenosine(2503) in 23S rRNA + 2 reduced [2Fe-2S]-[ferredoxin] + 2 S-adenosyl-L-methionine = 2-methyladenosine(2503) in 23S rRNA + 5'-deoxyadenosine + L-methionine + 2 oxidized [2Fe-2S]-[ferredoxin] + S-adenosyl-L-homocysteine. It catalyses the reaction adenosine(37) in tRNA + 2 reduced [2Fe-2S]-[ferredoxin] + 2 S-adenosyl-L-methionine = 2-methyladenosine(37) in tRNA + 5'-deoxyadenosine + L-methionine + 2 oxidized [2Fe-2S]-[ferredoxin] + S-adenosyl-L-homocysteine. Specifically methylates position 2 of adenine 2503 in 23S rRNA and position 2 of adenine 37 in tRNAs. The protein is Probable dual-specificity RNA methyltransferase RlmN of Mycolicibacterium vanbaalenii (strain DSM 7251 / JCM 13017 / BCRC 16820 / KCTC 9966 / NRRL B-24157 / PYR-1) (Mycobacterium vanbaalenii).